The sequence spans 525 residues: Chromaffin granule amine transporter (525 aa).

The Cytoplasmic segment spans residues 1–21 (MLRTILDAPQRLLKEGRASRQ). Residues 22–42 (LVLVVVFVALLLDNMLFTVVV) form a helical membrane-spanning segment. Over 43-138 (PIVPTFLYDM…TGFLEEEITR (96 aa)) the chain is Lumenal, vesicle. Asn58, Asn87, and Asn104 each carry an N-linked (GlcNAc...) asparagine glycan. A helical membrane pass occupies residues 139-158 (VGVLFASKAVMQLLVNPFVG). Over 159–167 (PLTNRIGYH) the chain is Cytoplasmic. A helical transmembrane segment spans residues 168-188 (IPMFAGFVIMFLSTVMFAFSG). Topologically, residues 189 to 197 (TYTLLFVAR) are lumenal, vesicle. Residues 198 to 218 (TLQGIGSSFSSVAGLGMLASV) form a helical membrane-spanning segment. At 219–227 (YTDDHERGR) the chain is on the cytoplasmic side. A helical membrane pass occupies residues 228–250 (AMGTALGGLALGLLVGAPFGSVM). The Lumenal, vesicle segment spans residues 251-256 (YEFVGK). A helical membrane pass occupies residues 257–279 (SAPFLILAFLALLDGALQLCILQ). The Cytoplasmic segment spans residues 280 to 299 (PSKVSPESAKGTPLFMLLKD). The helical transmembrane segment at 300–319 (PYILVAAGSICFANMGVAIL) threads the bilayer. The Lumenal, vesicle segment spans residues 320-335 (EPTLPIWMMQTMCSPK). Residues 336-360 (WQLGLAFLPASVSYLIGTNLFGVLA) traverse the membrane as a helical segment. The Cytoplasmic portion of the chain corresponds to 361–365 (NKMGR). A helical transmembrane segment spans residues 366-386 (WLCSLIGMLVVGTSLLCVPLA). Over 387-397 (HNIFGLIGPNA) the chain is Lumenal, vesicle. A helical transmembrane segment spans residues 398–418 (GLGLAIGMVDSSMMPIMGHLV). At 419-422 (DLRH) the chain is on the cytoplasmic side. Residues 423-443 (TSVYGSVYAIADVAFCMGFAI) form a helical membrane-spanning segment. Residues 444 to 448 (GPSTG) are Lumenal, vesicle-facing. The chain crosses the membrane as a helical span at residues 449–470 (GAIVKAIGFPWLMVITGVINIV). At 471 to 525 (YAPLCYYLRSPPAKEEKLAILSQDCPMETRMYATQKPTKEFPLGEDSDEEPDHEE) the chain is on the cytoplasmic side. Residues 503–525 (ATQKPTKEFPLGEDSDEEPDHEE) are disordered. Residues 513–525 (LGEDSDEEPDHEE) show a composition bias toward acidic residues.

This sequence belongs to the major facilitator superfamily. Vesicular transporter family. In terms of tissue distribution, expressed primarily in neuroendocrine tissues. Highly expressed in chromaffin cells of the adrenal medulla (at protein level). Detected in peripheral sympathetic ganglia (at protein level). Found in some paracrine cells in stomach and duodenum (at protein level). Expressed in substantia nigra. As to expression, expressed in gastrointestinal tract.

The protein resides in the cytoplasmic vesicle. Its subcellular location is the secretory vesicle membrane. It localises to the secretory vesicle. The protein localises to the synaptic vesicle membrane. It is found in the endoplasmic reticulum membrane. It catalyses the reaction serotonin(in) + 2 H(+)(out) = serotonin(out) + 2 H(+)(in). The enzyme catalyses (R)-noradrenaline(in) + 2 H(+)(out) = (R)-noradrenaline(out) + 2 H(+)(in). The catalysed reaction is dopamine(in) + 2 H(+)(out) = dopamine(out) + 2 H(+)(in). Strongly inhibited by reserpine. Also inhibited to a lesser extent by ketanserin and fenfluramine. Not significantly inhibited by tetrabenazine. In terms of biological role, electrogenic antiporter that exchanges one cationic monoamine with two intravesicular protons across the membrane of secretory and synaptic vesicles. Uses the electrochemical proton gradient established by the V-type proton-pump ATPase to accumulate high concentrations of monoamines inside the vesicles prior to their release via exocytosis. Transports catecholamines and indolamines with higher affinity for serotonin. Regulates the transvesicular monoaminergic gradient that determines the quantal size. Mediates presynaptic monoaminergic vesicle transport in the amygdala and prefrontal brain regions related with emotion processing in response to environmental stimuli. Its function is as follows. Unable to uptake serotonin. This is Chromaffin granule amine transporter (SLC18A1) from Homo sapiens (Human).